The chain runs to 623 residues: Glutamine--fructose-6-phosphate aminotransferase [isomerizing] (623 aa).

Catalysis depends on Cys2, which acts as the Nucleophile; for GATase activity. Residues Cys2–Asp228 form the Glutamine amidotransferase type-2 domain. SIS domains follow at residues Ile295–Asn435 and Leu468–Pro613. Residue Lys618 is the For Fru-6P isomerization activity of the active site.

Homodimer.

The protein localises to the cytoplasm. It carries out the reaction D-fructose 6-phosphate + L-glutamine = D-glucosamine 6-phosphate + L-glutamate. Functionally, catalyzes the first step in hexosamine metabolism, converting fructose-6P into glucosamine-6P using glutamine as a nitrogen source. The polypeptide is Glutamine--fructose-6-phosphate aminotransferase [isomerizing] (Corynebacterium efficiens (strain DSM 44549 / YS-314 / AJ 12310 / JCM 11189 / NBRC 100395)).